The chain runs to 61 residues: Small ribosomal subunit protein uS14 (61 aa).

The Zn(2+) site is built by Cys24, Cys27, Cys40, and Cys43.

Belongs to the universal ribosomal protein uS14 family. Zinc-binding uS14 subfamily. In terms of assembly, part of the 30S ribosomal subunit. Contacts proteins S3 and S10. The cofactor is Zn(2+).

Binds 16S rRNA, required for the assembly of 30S particles and may also be responsible for determining the conformation of the 16S rRNA at the A site. The sequence is that of Small ribosomal subunit protein uS14 from Streptococcus mutans serotype c (strain ATCC 700610 / UA159).